The following is a 158-amino-acid chain: Phosphopantetheine adenylyltransferase (158 aa).

T9 contacts substrate. ATP is bound by residues 9-10 (TF) and H17. Residues K41, L73, and R87 each coordinate substrate. Residues 88–90 (GVR), E98, and 123–129 (WSYVSST) each bind ATP.

It belongs to the bacterial CoaD family. Homohexamer. Requires Mg(2+) as cofactor.

It localises to the cytoplasm. It carries out the reaction (R)-4'-phosphopantetheine + ATP + H(+) = 3'-dephospho-CoA + diphosphate. The protein operates within cofactor biosynthesis; coenzyme A biosynthesis; CoA from (R)-pantothenate: step 4/5. Its function is as follows. Reversibly transfers an adenylyl group from ATP to 4'-phosphopantetheine, yielding dephospho-CoA (dPCoA) and pyrophosphate. The chain is Phosphopantetheine adenylyltransferase from Pasteurella multocida (strain Pm70).